The sequence spans 744 residues: MLRSTLSRSAWRTGRHQAARNASRAFSATAQRPAEVELTIDGKKVSIEAGSALIQACEKAGVTIPRYCYHEKLMIAGNCRMCLVEVEKVPKPVASCAWPVQPGMVVKTNSPLTHKAREGVMEFLLANHPLDCPICDQGGECDLQDQSMRYGGDRGRFHEVGGKRAVEDKNMGPLIKTSMNRCIQCTRCVRFANDIAGAPELGSTGRGNDLQIGTYLEKNLDSELSGNVIDLCPVGALTSKPYAFRARPWELKKTESIDVLDGLGSNIRVDTRGLEVMRILPRLNDEVNEEWINDKTRFACDGLKTQRLTIPLVRREGKFEPASWDQALTEIAHAYQTLNPQGNEFKAIAGQLTEVESLVAMKDLANRLGSENLALDMPSGHKPLAHGVDVRSNYIFNSSIVGIESADVILLVGTNPRHEAAVLNARIRKQWLRSDLEIGVVGQTWDSTFEFEHLGTDHAALQKALEGDFGKKLQSAKNPMIIVGSGVTDHGDANAFYETVGKFVDSNASNFLTEEWNGYNVLQRAASRVGAFEVGFTVPSAEIAQTKPKFVWLLGADEFNEADIPKDAFIVYQGHHGDRGAQIADIVLPGAAYTEKAGTYVNTEGRVQMTRAATGLPGAARTDWKILRAVSEYLGVRLPYDDVAQLRDRMVEISPALSSYDIIEPPSLQQLSKVQLVEQNQGATATNEPLKKVIENFYFTDAISRSSPTMARCSAAKKTGDPRTNFMAPGMEEDRPMGQIAYGA.

Residues 1 to 10 are compositionally biased toward polar residues; sequence MLRSTLSRSA. The disordered stretch occupies residues 1–26; it reads MLRSTLSRSAWRTGRHQAARNASRAF. The N-terminal 33 residues, 1 to 33, are a transit peptide targeting the mitochondrion; the sequence is MLRSTLSRSAWRTGRHQAARNASRAFSATAQRP. In terms of domain architecture, 2Fe-2S ferredoxin-type spans 34–112; it reads AEVELTIDGK…GMVVKTNSPL (79 aa). [2Fe-2S] cluster contacts are provided by Cys68, Cys79, Cys82, and Cys96. The 4Fe-4S His(Cys)3-ligated-type domain occupies 112–151; the sequence is LTHKAREGVMEFLLANHPLDCPICDQGGECDLQDQSMRYG. [4Fe-4S] cluster is bound by residues His128, Cys132, Cys135, Cys141, Cys182, Cys185, Cys188, and Cys232. Residues 251–307 enclose the 4Fe-4S Mo/W bis-MGD-type domain; the sequence is LKKTESIDVLDGLGSNIRVDTRGLEVMRILPRLNDEVNEEWINDKTRFACDGLKTQR.

Belongs to the complex I 75 kDa subunit family. Complex I is composed of about 40 different subunits. The cofactor is [2Fe-2S] cluster. [4Fe-4S] cluster is required as a cofactor.

The protein resides in the mitochondrion inner membrane. It carries out the reaction a ubiquinone + NADH + 5 H(+)(in) = a ubiquinol + NAD(+) + 4 H(+)(out). In terms of biological role, core subunit of the mitochondrial membrane respiratory chain NADH dehydrogenase (Complex I) that is believed to belong to the minimal assembly required for catalysis. Complex I functions in the transfer of electrons from NADH to the respiratory chain. The immediate electron acceptor for the enzyme is believed to be ubiquinone. This is the largest subunit of complex I and it is a component of the iron-sulfur (IP) fragment of the enzyme. It may form part of the active site crevice where NADH is oxidized. The chain is NADH-ubiquinone oxidoreductase 78 kDa subunit, mitochondrial (nuo78) from Neurospora crassa (strain ATCC 24698 / 74-OR23-1A / CBS 708.71 / DSM 1257 / FGSC 987).